A 370-amino-acid chain; its full sequence is UDP-N-acetylglucosamine--N-acetylmuramyl-(pentapeptide) pyrophosphoryl-undecaprenol N-acetylglucosamine transferase (370 aa).

UDP-N-acetyl-alpha-D-glucosamine-binding positions include 15-17, Asn-129, Arg-171, Ser-200, Ile-256, and Gln-301; that span reads TGG.

It belongs to the glycosyltransferase 28 family. MurG subfamily.

The protein resides in the cell membrane. It carries out the reaction di-trans,octa-cis-undecaprenyl diphospho-N-acetyl-alpha-D-muramoyl-L-alanyl-D-glutamyl-meso-2,6-diaminopimeloyl-D-alanyl-D-alanine + UDP-N-acetyl-alpha-D-glucosamine = di-trans,octa-cis-undecaprenyl diphospho-[N-acetyl-alpha-D-glucosaminyl-(1-&gt;4)]-N-acetyl-alpha-D-muramoyl-L-alanyl-D-glutamyl-meso-2,6-diaminopimeloyl-D-alanyl-D-alanine + UDP + H(+). It functions in the pathway cell wall biogenesis; peptidoglycan biosynthesis. Its function is as follows. Cell wall formation. Catalyzes the transfer of a GlcNAc subunit on undecaprenyl-pyrophosphoryl-MurNAc-pentapeptide (lipid intermediate I) to form undecaprenyl-pyrophosphoryl-MurNAc-(pentapeptide)GlcNAc (lipid intermediate II). This Caldicellulosiruptor saccharolyticus (strain ATCC 43494 / DSM 8903 / Tp8T 6331) protein is UDP-N-acetylglucosamine--N-acetylmuramyl-(pentapeptide) pyrophosphoryl-undecaprenol N-acetylglucosamine transferase.